The following is a 91-amino-acid chain: Small ribosomal subunit protein uS19 (91 aa).

The protein belongs to the universal ribosomal protein uS19 family.

Functionally, protein S19 forms a complex with S13 that binds strongly to the 16S ribosomal RNA. The sequence is that of Small ribosomal subunit protein uS19 from Amoebophilus asiaticus (strain 5a2).